A 35-amino-acid chain; its full sequence is U1-theraphotoxin-Hhn1a (35 aa).

3 disulfide bridges follow: C2–C16, C9–C21, and C15–C28.

Belongs to the neurotoxin 10 (Hwtx-1) family. 24 (Hwtx-6) subfamily. Expressed by the venom gland.

It localises to the secreted. Its function is as follows. Gating-modifier toxin that dose-dependently inhibits inactivation of voltage-gated sodium channels and reduces the peak of sodium current in cockroach DUM neurons. In vivo, reversibly paralyzes cockroaches for several hours, paralyzes rat after intracerebroventricular injection and blocks the neuromuscular transmission of the isolated rat phrenic nerve-diaphragm preparation. The protein is U1-theraphotoxin-Hhn1a of Cyriopagopus hainanus (Chinese bird spider).